The sequence spans 228 residues: UPF0758 protein Reut_A2732 (228 aa).

Residues Gly102–Leu224 form the MPN domain. Residues His173, His175, and Asp186 each contribute to the Zn(2+) site. Positions His173–Asp186 match the JAMM motif motif.

This sequence belongs to the UPF0758 family.

This chain is UPF0758 protein Reut_A2732, found in Cupriavidus pinatubonensis (strain JMP 134 / LMG 1197) (Cupriavidus necator (strain JMP 134)).